The primary structure comprises 193 residues: NADH-quinone oxidoreductase subunit B (193 aa).

[4Fe-4S] cluster is bound by residues Cys-72, Cys-73, Cys-137, and Cys-167.

It belongs to the complex I 20 kDa subunit family. As to quaternary structure, NDH-1 is composed of 14 different subunits. Subunits NuoB, C, D, E, F, and G constitute the peripheral sector of the complex. It depends on [4Fe-4S] cluster as a cofactor.

It is found in the cell inner membrane. It catalyses the reaction a quinone + NADH + 5 H(+)(in) = a quinol + NAD(+) + 4 H(+)(out). Its function is as follows. NDH-1 shuttles electrons from NADH, via FMN and iron-sulfur (Fe-S) centers, to quinones in the respiratory chain. The immediate electron acceptor for the enzyme in this species is believed to be ubiquinone. Couples the redox reaction to proton translocation (for every two electrons transferred, four hydrogen ions are translocated across the cytoplasmic membrane), and thus conserves the redox energy in a proton gradient. This chain is NADH-quinone oxidoreductase subunit B, found in Rhizobium rhizogenes (strain K84 / ATCC BAA-868) (Agrobacterium radiobacter).